The following is a 397-amino-acid chain: F-box protein At4g11590 (397 aa).

Positions Glu-24–Phe-70 constitute an F-box domain.

In terms of assembly, part of a SCF (ASK-cullin-F-box) protein ligase complex. Interacts with ASK16.

The protein localises to the nucleus. The protein operates within protein modification; protein ubiquitination. Its function is as follows. Component of SCF(ASK-cullin-F-box) E3 ubiquitin ligase complexes, which may mediate the ubiquitination and subsequent proteasomal degradation of target proteins. The chain is F-box protein At4g11590 from Arabidopsis thaliana (Mouse-ear cress).